Consider the following 507-residue polypeptide: Probable cytosol aminopeptidase (507 aa).

Positions 275 and 280 each coordinate Mn(2+). The active site involves Lys-287. Positions 298, 357, and 359 each coordinate Mn(2+). The active site involves Arg-361.

Belongs to the peptidase M17 family. Requires Mn(2+) as cofactor.

It is found in the cytoplasm. It catalyses the reaction Release of an N-terminal amino acid, Xaa-|-Yaa-, in which Xaa is preferably Leu, but may be other amino acids including Pro although not Arg or Lys, and Yaa may be Pro. Amino acid amides and methyl esters are also readily hydrolyzed, but rates on arylamides are exceedingly low.. It carries out the reaction Release of an N-terminal amino acid, preferentially leucine, but not glutamic or aspartic acids.. In terms of biological role, presumably involved in the processing and regular turnover of intracellular proteins. Catalyzes the removal of unsubstituted N-terminal amino acids from various peptides. This is Probable cytosol aminopeptidase from Rhodopirellula baltica (strain DSM 10527 / NCIMB 13988 / SH1).